We begin with the raw amino-acid sequence, 597 residues long: UvrABC system protein C (597 aa).

A GIY-YIG domain is found at 15–93 (NSPGVYQYFD…IKKHQPRFNV (79 aa)). Positions 207 to 242 (KDSLQRFRNQMKQHSEKMEFEDAQRIKNKIDVLENY) constitute a UVR domain.

The protein belongs to the UvrC family. As to quaternary structure, interacts with UvrB in an incision complex.

The protein localises to the cytoplasm. Its function is as follows. The UvrABC repair system catalyzes the recognition and processing of DNA lesions. UvrC both incises the 5' and 3' sides of the lesion. The N-terminal half is responsible for the 3' incision and the C-terminal half is responsible for the 5' incision. This chain is UvrABC system protein C, found in Christiangramia forsetii (strain DSM 17595 / CGMCC 1.15422 / KT0803) (Gramella forsetii).